We begin with the raw amino-acid sequence, 301 residues long: UDP-N-acetylenolpyruvoylglucosamine reductase (301 aa).

Residues 30–194 (VGGEPDYLVF…LSAKFALAPG (165 aa)) form the FAD-binding PCMH-type domain. Arginine 173 is a catalytic residue. The Proton donor role is filled by serine 223. Glutamate 293 is a catalytic residue.

Belongs to the MurB family. It depends on FAD as a cofactor.

It localises to the cytoplasm. The enzyme catalyses UDP-N-acetyl-alpha-D-muramate + NADP(+) = UDP-N-acetyl-3-O-(1-carboxyvinyl)-alpha-D-glucosamine + NADPH + H(+). It participates in cell wall biogenesis; peptidoglycan biosynthesis. Its function is as follows. Cell wall formation. In Streptococcus pneumoniae (strain CGSP14), this protein is UDP-N-acetylenolpyruvoylglucosamine reductase.